The chain runs to 307 residues: tRNA pseudouridine synthase B (307 aa).

Catalysis depends on Asp-38, which acts as the Nucleophile.

The protein belongs to the pseudouridine synthase TruB family. Type 1 subfamily.

The enzyme catalyses uridine(55) in tRNA = pseudouridine(55) in tRNA. Its function is as follows. Responsible for synthesis of pseudouridine from uracil-55 in the psi GC loop of transfer RNAs. This chain is tRNA pseudouridine synthase B, found in Bacillus cytotoxicus (strain DSM 22905 / CIP 110041 / 391-98 / NVH 391-98).